Consider the following 340-residue polypeptide: MLIAQRPSLTEEVVDEFRSRFVIEPLEPGFGYTLGNSLRRTLLSSIPGAAVTSIRIDGVLHEFTTVPGVKEDVTDLILNIKQLVVSSEHDEPVVMYLRKQGPGLVTAADIAPPAGVEVHNPDLVLATLNAKGKLEMELTVERGRGYVSAVQNKQVGQEIGRIPVDSIYSPVLKVTYKVEATRVEQRTDFDKLIVDVETKQAMRPRDAMASAGKTLVELFGLARELNIDAEGIDMGPSPTDAALAADLALPIEELELTVRSYNCLKREGIHSVGELVARSEADLLDIRNFGAKSIDEVKAKLAGMGLALKDSPPGFDPTAAADAFGADDDADAGFVETEQY.

The alpha N-terminal domain (alpha-NTD) stretch occupies residues 1–226 (MLIAQRPSLT…ELFGLARELN (226 aa)). The alpha C-terminal domain (alpha-CTD) stretch occupies residues 243–340 (LAADLALPIE…DAGFVETEQY (98 aa)).

It belongs to the RNA polymerase alpha chain family. In terms of assembly, homodimer. The RNAP catalytic core consists of 2 alpha, 1 beta, 1 beta' and 1 omega subunit. When a sigma factor is associated with the core the holoenzyme is formed, which can initiate transcription. The last 19 amino acids in the C-terminal part are cleaved in the spore.

The catalysed reaction is RNA(n) + a ribonucleoside 5'-triphosphate = RNA(n+1) + diphosphate. DNA-dependent RNA polymerase catalyzes the transcription of DNA into RNA using the four ribonucleoside triphosphates as substrates. This Streptomyces granaticolor protein is DNA-directed RNA polymerase subunit alpha.